Here is a 1012-residue protein sequence, read N- to C-terminus: Beta-alanine-activating enzyme (1012 aa).

ATP-binding positions include 177–185 (TTGTTGKPK), aspartate 411, arginine 426, and lysine 516.

This sequence belongs to the ATP-dependent AMP-binding enzyme family.

Covalently binds beta-alanine in an ATP-dependent manner to form a thioester bond with its phosphopantetheine group and transfers it to an, as yet, unknown acceptor. May be required for a post-translational protein modification or for post-transcriptional modification of an RNA. This Drosophila melanogaster (Fruit fly) protein is Beta-alanine-activating enzyme.